The primary structure comprises 63 residues: Small ribosomal subunit protein eS31 (63 aa).

4 residues coordinate Zn(2+): Cys-31, Cys-34, Cys-50, and Cys-53.

It belongs to the eukaryotic ribosomal protein eS31 family. Part of the 30S ribosomal subunit. The cofactor is Zn(2+).

The protein is Small ribosomal subunit protein eS31 (rps27ae) of Aeropyrum pernix (strain ATCC 700893 / DSM 11879 / JCM 9820 / NBRC 100138 / K1).